The chain runs to 396 residues: Alpha-1-antitrypsin (396 aa).

Positions 1–2 (HV) are cleaved as a signal peptide. A disordered region spans residues 1-24 (HVEDPQGDAAQKTDTSHHDQEHST). A compositionally biased stretch (basic and acidic residues) spans 14–24 (DTSHHDQEHST). At Ser16 the chain carries Phosphoserine. N-linked (GlcNAc...) asparagine glycosylation is found at Asn48, Asn85, Asn123, and Asn249. The interval 351–370 (GAMFLEAIPMSIPPEVKFNK) is RCL. Residue Ser361 is modified to Phosphoserine.

Belongs to the serpin family. In terms of assembly, interacts with CELA2A. Interacts with ERGIC3 and LMAN1/ERGIC53. Interacts with PRSS1/Trypsin. As to expression, plasma.

Its subcellular location is the secreted. Its function is as follows. Inhibitor of serine proteases. Its primary target is elastase, but it also has a moderate affinity for plasmin and thrombin. Inhibits trypsin, chymotrypsin and plasminogen activator. This is Alpha-1-antitrypsin (SERPINA1) from Chlorocebus aethiops (Green monkey).